Reading from the N-terminus, the 93-residue chain is UPF0223 protein LACR_0546 (93 aa).

This sequence belongs to the UPF0223 family.

This is UPF0223 protein LACR_0546 from Lactococcus lactis subsp. cremoris (strain SK11).